The chain runs to 867 residues: E3 ubiquitin-protein ligase SH3RF1 (867 aa).

The RING-type zinc-finger motif lies at 12-53 (CPVCLERLDATAKVLPCQHTFCRRCLLGIVGSRGELRCPECR). Residues 101-127 (AQGAGGSQRDPGPTGGQSQRVQAKSTP) are disordered. A compositionally biased stretch (polar residues) spans 116–125 (GQSQRVQAKS). 2 SH3 domains span residues 132 to 191 (PQLP…VIKP) and 194 to 257 (QPPP…FNSA). The tract at residues 265–328 (DKPSEGGGDS…PPPQRHSMEI (64 aa)) is disordered. Residues 275 to 285 (SEGPSSSSSGP) are compositionally biased toward low complexity. The SH3 3 domain occupies 436 to 497 (QRPTVYVAMF…PGNYMSPVSR (62 aa)). The segment at 706–794 (LSNKKKLRPS…APIAPPPRQP (89 aa)) is disordered. A compositionally biased stretch (low complexity) spans 760–769 (SELSMSSSSS). The segment covering 770–784 (NTDAVTHRSSPQDNT) has biased composition (polar residues). The SH3 4 domain maps to 808–867 (IVCERYRVVVSYPPQSEAELELKEGDIVFVHKKREDGWFKGTLQRNGRTGLFPGSFVDSI).

The protein belongs to the SH3RF family. In terms of processing, autoubiquitinated. Ubiquitinated by SH3RF2, leading to proteasome-mediated degradation.

The protein localises to the cytoplasm. The protein resides in the perinuclear region. It localises to the cell projection. Its subcellular location is the lamellipodium. It is found in the golgi apparatus. The protein localises to the trans-Golgi network. It catalyses the reaction S-ubiquitinyl-[E2 ubiquitin-conjugating enzyme]-L-cysteine + [acceptor protein]-L-lysine = [E2 ubiquitin-conjugating enzyme]-L-cysteine + N(6)-ubiquitinyl-[acceptor protein]-L-lysine.. It participates in protein modification; protein ubiquitination. Functionally, has E3 ubiquitin-protein ligase activity. In the absence of an external substrate, it can catalyze self-ubiquitination. Acts as a scaffold protein that contributes to the effective activation of the JNK signaling pathway. This is E3 ubiquitin-protein ligase SH3RF1 (sh3rf1) from Danio rerio (Zebrafish).